The primary structure comprises 1984 residues: Sodium channel protein type 9 subunit alpha (1984 aa).

At 1–125 (MAMLPPPGPQ…RRISIKILVH (125 aa)) the chain is on the cytoplasmic side. Residues 26–39 (RISEEKAKGHKDEK) show a composition bias toward basic and acidic residues. A disordered region spans residues 26 to 55 (RISEEKAKGHKDEKKDDEEEGPKPSSDLEA). An I repeat occupies 112–410 (FSPLRRISIK…VAMAYEEQNQ (299 aa)). A helical transmembrane segment spans residues 126 to 145 (SLFSMLIMCTILTNCIFMTM). Over 146–150 (SNPPD) the chain is Extracellular. The chain crosses the membrane as a helical span at residues 151 to 172 (WTKNVEYTFTGIYTFESLIKIL). The Cytoplasmic segment spans residues 173–185 (ARGFCVGEFTFLR). The helical transmembrane segment at 186–204 (DPWNWLDFVVIVFAYLTEF) threads the bilayer. Residues 205-210 (VNLGNV) lie on the Extracellular side of the membrane. Residues 211–227 (SALRTFRVLRALKTISV) traverse the membrane as a helical segment. The Cytoplasmic segment spans residues 228-241 (IPGLKTIVGALIQS). The chain crosses the membrane as a helical span at residues 242-267 (VKKLSDVMILTVFCLSVFALIGLQLF). Topologically, residues 268–346 (MGNLKHKCFR…PDYGYTSFDT (79 aa)) are extracellular. C275 and C324 form a disulfide bridge. Residues 347 to 363 (FGWAFLALFRLMTQDYW) constitute an intramembrane region (pore-forming). The Extracellular segment spans residues 364–376 (ENLYQQTLRAAGK). Residues 377-402 (TYMIFFVVVIFLGSFYLINLILAVVA) form a helical membrane-spanning segment. Positions 402 to 449 (AMAYEEQNQANIEEAKQKELEFQQMLDRLKKEQEEAEAIAAAAAEYTS) form a coiled coil. The Cytoplasmic segment spans residues 403 to 744 (MAYEEQNQAN…FIYFIVMDPF (342 aa)). Over residues 458 to 471 (LSESSSETSRLSSK) the composition is skewed to low complexity. Disordered regions lie at residues 458–540 (LSES…SIRG) and 574–609 (HSIF…RSPP). A compositionally biased stretch (basic residues) spans 474–486 (KERRNRRKKKKQK). Composition is skewed to basic and acidic residues over residues 489 to 509 (SGEE…ESIR) and 574 to 584 (HSIFGDNESRR). Positions 684 to 708 (LRQRAMSRASILTNTVEELEESRQK) form a coiled coil. One copy of the II repeat lies at 725–988 (CSPYWIKFKK…EEDTDANNLQ (264 aa)). The chain crosses the membrane as a helical span at residues 745–761 (VDLAITICIVLNTLFMA). Residues 762–770 (MEHHPMTDE) lie on the Extracellular side of the membrane. The chain crosses the membrane as a helical span at residues 771-795 (FKNVLAVGNLVFTGIFAAEMVLKLI). Residues 796-804 (AMDPYEYFQ) lie on the Cytoplasmic side of the membrane. A helical transmembrane segment spans residues 805–821 (VGWNIFDSLIVTLSLVE). Residues 822 to 830 (LFLADVEGL) are Extracellular-facing. The helical transmembrane segment at 831 to 847 (SVLRSFRLLRVFKLAKS) threads the bilayer. Residues 848–864 (WPTLNMLIKIIGNSVGA) lie on the Cytoplasmic side of the membrane. A helical membrane pass occupies residues 865–887 (LGNLTLVLAIIVFIFAVVGMQLF). The Extracellular portion of the chain corresponds to 888-914 (GKSYKECVCKINENCKLPRWHMNDFFH). A disulfide bond links C896 and C902. The pore-forming intramembrane region spans 915 to 927 (SFLIVFRVLCGEW). Topologically, residues 928–939 (IETMWDCMEVAG) are extracellular. C934 and C943 are disulfide-bonded. A helical transmembrane segment spans residues 940 to 966 (QTMCLIVYMMVMVIGNLVVLNLFLALL). The Cytoplasmic segment spans residues 967 to 1185 (LSSFSSDNLT…WWTIRKTCYR (219 aa)). Disordered stretches follow at residues 1015-1039 (KKPK…YISN) and 1089-1145 (PIAP…EPIN). A compositionally biased stretch (basic and acidic residues) spans 1019–1035 (GSKDTKRTADPNNKREN). Acidic residues predominate over residues 1135–1145 (GEEEAEAEPIN). The stretch at 1178-1486 (TIRKTCYRIV…KKYYNAMKKL (309 aa)) is one III repeat. The helical transmembrane segment at 1186 to 1210 (IVEHSWFESFIVLMILLSSGALAFE) threads the bilayer. The Extracellular segment spans residues 1211–1222 (DIYIEKKKTIKI). The chain crosses the membrane as a helical span at residues 1223–1248 (ILEYADKIFTYIFILEMLLKWVAYGY). Residues 1249–1250 (KT) lie on the Cytoplasmic side of the membrane. The helical transmembrane segment at 1251 to 1276 (YFTNAWCWLDFLIVDVSLVTLVANTL) threads the bilayer. Over 1277 to 1285 (GYSDLGPIK) the chain is Extracellular. Residues 1286-1302 (SLRTLRALRPLRALSRF) traverse the membrane as a helical segment. The Cytoplasmic segment spans residues 1303–1315 (EGMRVVVNALIGA). A helical membrane pass occupies residues 1316 to 1340 (IPSIMNVLLVCLIFWLIFSIMGVNL). The Extracellular segment spans residues 1341–1392 (FAGKFYECVNTTDGSRFSVSQVANRSECFALMNVSGNVRWKNLKVNFDNVGL). Residues C1348 and C1368 are joined by a disulfide bond. An intramembrane region (pore-forming) is located at residues 1393–1403 (GYLSLLQVATF). Over 1404–1429 (KGWMDIMYAAVDSVNVNAQPIYEYNL) the chain is Extracellular. The helical transmembrane segment at 1430 to 1455 (YMYIYFVIFIIFGSFFTLNLFIGVII) threads the bilayer. Residues 1456–1512 (DNFNQQKKKLGGQDIFMTEEQKKYYNAMKKLGSKKPQKPIPRPGNKFQGCIFDLVTN) lie on the Cytoplasmic side of the membrane. Phosphoserine; by PKC is present on S1488. The stretch at 1495-1793 (IPRPGNKFQG…WEKFDPDATQ (299 aa)) is one IV repeat. A helical membrane pass occupies residues 1513–1532 (QAFDITIMVLICLNMVTMMV). Topologically, residues 1533 to 1543 (EKEGQTDYMSF) are extracellular. A helical membrane pass occupies residues 1544–1565 (VLYWINVVFIILFTGECVLKLI). The Cytoplasmic segment spans residues 1566–1574 (SLRHYYFTV). A helical membrane pass occupies residues 1575–1596 (GWNIFDFVVVILSIVGMFLAEM). Over 1597–1605 (IEKYFVSPT) the chain is Extracellular. A helical transmembrane segment spans residues 1606–1625 (LFRVIRLARIGRILRLIKGA). At 1626 to 1638 (KGIRTLLFALMMS) the chain is on the cytoplasmic side. Residues 1639 to 1661 (LPALFNIGLLLFLVMFIYAIFGM) traverse the membrane as a helical segment. The Extracellular segment spans residues 1662–1684 (SNFAYVKKEAGINDMFNFETFGN). Residues 1685-1697 (SMICLFQITTSAG) constitute an intramembrane region (pore-forming). The Extracellular portion of the chain corresponds to 1698 to 1731 (WDGLLAPILNSAPPDCDPKKVHPGSSVEGDCGNP). A disulfide bond links C1713 and C1728. The helical transmembrane segment at 1732 to 1757 (SVGIFYFVSYIIISFLVVVNMYIAVI) threads the bilayer. Residues 1758–1984 (LENFSVATEE…EDKEKDESRK (227 aa)) lie on the Cytoplasmic side of the membrane. Residues 1887–1916 (EDVSATIIQRAYRRYRLRQNVKNISSIYIK) enclose the IQ domain. The disordered stretch occupies residues 1933–1984 (DNVNENSSPEKTDATASTISPPSYDSVTKPDQEKYETDKTEKEDKEKDESRK). The segment covering 1946 to 1958 (ATASTISPPSYDS) has biased composition (polar residues). Over residues 1960–1984 (TKPDQEKYETDKTEKEDKEKDESRK) the composition is skewed to basic and acidic residues.

This sequence belongs to the sodium channel (TC 1.A.1.10) family. Nav1.7/SCN9A subfamily. In terms of assembly, the Nav1.7 voltage-gated sodium channel consists of an ion-conducting alpha subunit SCN9A which is functional on its own regulated by one or more beta-1 (SCN1B), beta-2 (SCN2B), beta-3 (SCN3B) and beta-4 (SCN4B) subunits. SCN1B and SCN3B are non-covalently associated with SCN9A. SCN2B and SCN4B are disulfide-linked to SCN9A. SCN1B regulates channel inactivation. Interacts with NEDD4 and NEDD4L; regulates Nav1.7 activity most probably through ubiquitination and subsequent endocytosis. Interacts with TMEM233; modulates the gating properties of NaV1.7. Ubiquitinated by NEDD4L; which may promote its endocytosis. In terms of processing, phosphorylation at Ser-1488 by PKC in a highly conserved cytoplasmic loop increases peak sodium currents. Expressed strongly in sciatic nerves, with moderate levels in kidney. Not detected in liver, brain and muscle.

The protein resides in the cell membrane. It is found in the cell projection. It localises to the neuron projection. The protein localises to the axon. The enzyme catalyses Na(+)(in) = Na(+)(out). Its function is as follows. Pore-forming subunit of Nav1.7, a voltage-gated sodium (Nav) channel that directly mediates the depolarizing phase of action potentials in excitable membranes. Navs, also called VGSCs (voltage-gated sodium channels) or VDSCs (voltage-dependent sodium channels), operate by switching between closed and open conformations depending on the voltage difference across the membrane. In the open conformation they allow Na(+) ions to selectively pass through the pore, along their electrochemical gradient. The influx of Na(+) ions provokes membrane depolarization, initiating the propagation of electrical signals throughout cells and tissues. Nav1.7 plays a crucial role in controlling the excitability and action potential propagation from nociceptor neurons, thereby contributing to the sensory perception of pain. This is Sodium channel protein type 9 subunit alpha from Mus musculus (Mouse).